The following is a 380-amino-acid chain: MHFVIDRDIFVQNVNHVSKAVSSRTTIPILTGIKIVADHEGVTLTGSDSDISIETFIPLEEGDRQNVEVKQEGSIVLQAKVFAEIVKKLPEQEIEIHVQDSFVTTIRSGSSVFNLNGLDPDEYPRLPVLEEDHVFRLPQKILKDIIRQTVFAVSTQETRPVLTGVNFEIEDGILTCTATDSHRLAMRKVPVEKNDDELQFSNVVIPGKSLNELSKILDENEELLDIVVTENQTLFKLKNMLFFSRLLEGKYPVTKNMIPKEAKTSFAVHTKAFLQTLERALLLSREGKNQVINLKTLGDGVVEVTAITPEIGKVTENVATQGLEGEELRISFNGKNVIDALKVVDSESIHIAFTGAMSPFVLSPTDHDQSLHLFSPVRTY.

This sequence belongs to the beta sliding clamp family. As to quaternary structure, forms a ring-shaped head-to-tail homodimer around DNA which binds and tethers DNA polymerases and other proteins to the DNA. The DNA replisome complex has a single clamp-loading complex (3 tau and 1 each of delta, delta', psi and chi subunits) which binds 3 Pol III cores (1 core on the leading strand and 2 on the lagging strand) each with a beta sliding clamp dimer. Additional proteins in the replisome are other copies of gamma, psi and chi, Ssb, DNA helicase and RNA primase.

It is found in the cytoplasm. Its function is as follows. Confers DNA tethering and processivity to DNA polymerases and other proteins. Acts as a clamp, forming a ring around DNA (a reaction catalyzed by the clamp-loading complex) which diffuses in an ATP-independent manner freely and bidirectionally along dsDNA. Initially characterized for its ability to contact the catalytic subunit of DNA polymerase III (Pol III), a complex, multichain enzyme responsible for most of the replicative synthesis in bacteria; Pol III exhibits 3'-5' exonuclease proofreading activity. The beta chain is required for initiation of replication as well as for processivity of DNA replication. The polypeptide is Beta sliding clamp (dnaN) (Halalkalibacterium halodurans (strain ATCC BAA-125 / DSM 18197 / FERM 7344 / JCM 9153 / C-125) (Bacillus halodurans)).